The following is a 502-amino-acid chain: Rab11 family-interacting protein 4B (502 aa).

Disordered stretches follow at residues methionine 1–isoleucine 49 and serine 71–serine 98. Positions glutamate 15 to alanine 29 are enriched in basic and acidic residues. Positions serine 71 to glutamate 80 are enriched in polar residues. A compositionally biased stretch (acidic residues) spans glutamate 81 to aspartate 93. Residues aspartate 228–tyrosine 482 are a coiled coil. The 63-residue stretch at glutamate 439–lysine 501 folds into the FIP-RBD domain.

As to quaternary structure, homodimer. Forms a complex with Rab11 (rab11a or rab11b) and arf6.

Its subcellular location is the recycling endosome membrane. The protein resides in the cleavage furrow. It is found in the midbody. It localises to the cytoplasmic vesicle. In terms of biological role, acts as a regulator of endocytic traffic by participating in membrane delivery. Required for the abscission step in cytokinesis, possibly by acting as an 'address tag' delivering recycling endosome membranes to the cleavage furrow during late cytokinesis. The sequence is that of Rab11 family-interacting protein 4B (rab11fip4b) from Danio rerio (Zebrafish).